The primary structure comprises 109 residues: Mitochondrial pyruvate carrier 2 (109 aa).

Helical transmembrane passes span 19 to 35, 51 to 67, and 74 to 90; these read IHFW…IANI, IAVT…STII, and LFSV…YQLT.

This sequence belongs to the mitochondrial pyruvate carrier (MPC) (TC 2.A.105) family.

Its subcellular location is the mitochondrion inner membrane. In terms of biological role, mediates the uptake of pyruvate into mitochondria. This Arabidopsis thaliana (Mouse-ear cress) protein is Mitochondrial pyruvate carrier 2.